The chain runs to 129 residues: MQITLLKSKLHRVTTTHSELDYEGSCAIDGHFLEVAGIREYEQIQIYNVNNGNRFTTYAIRAEENTGIISVNGAAAHKAAPGDLLIIATYASMDEKEAEEFKPIMVYFDEKNQITHTRNTIPKQMQQLA.

Catalysis depends on Ser25, which acts as the Schiff-base intermediate with substrate; via pyruvic acid. Ser25 carries the pyruvic acid (Ser) modification. Thr57 is a substrate binding site. Tyr58 (proton donor) is an active-site residue. 73–75 (GAA) is a substrate binding site.

The protein belongs to the PanD family. Heterooctamer of four alpha and four beta subunits. It depends on pyruvate as a cofactor. In terms of processing, is synthesized initially as an inactive proenzyme, which is activated by self-cleavage at a specific serine bond to produce a beta-subunit with a hydroxyl group at its C-terminus and an alpha-subunit with a pyruvoyl group at its N-terminus.

The protein resides in the cytoplasm. It carries out the reaction L-aspartate + H(+) = beta-alanine + CO2. Its pathway is cofactor biosynthesis; (R)-pantothenate biosynthesis; beta-alanine from L-aspartate: step 1/1. Catalyzes the pyruvoyl-dependent decarboxylation of aspartate to produce beta-alanine. The polypeptide is Aspartate 1-decarboxylase (Hydrogenovibrio crunogenus (strain DSM 25203 / XCL-2) (Thiomicrospira crunogena)).